The following is a 283-amino-acid chain: Putative sugar uptake protein BC_0219 (283 aa).

A run of 10 helical transmembrane segments spans residues 4–21 (LLAL…LVSV), 26–48 (GAYS…MYVF), 52–71 (ALTM…WALG), 84–106 (VSTT…GVIA), 110–132 (WTTT…GVVF), 151–173 (LLTL…WYNI), 178–195 (AILP…VLTS), 208–230 (ALSG…RVGV), 234–253 (FPLS…VFLG), and 260–279 (QLIF…VLLG).

The protein belongs to the GRP transporter (TC 2.A.7.5) family.

Its subcellular location is the cell membrane. This Bacillus cereus (strain ATCC 14579 / DSM 31 / CCUG 7414 / JCM 2152 / NBRC 15305 / NCIMB 9373 / NCTC 2599 / NRRL B-3711) protein is Putative sugar uptake protein BC_0219.